The sequence spans 505 residues: Glutamate--tRNA ligase (505 aa).

The short motif at 12 to 22 (PSPTGDPHVGT) is the 'HIGH' region element. Positions 253 to 257 (KLSKR) match the 'KMSKS' region motif. Lysine 256 is an ATP binding site.

It belongs to the class-I aminoacyl-tRNA synthetase family. Glutamate--tRNA ligase type 1 subfamily. In terms of assembly, monomer.

Its subcellular location is the cytoplasm. The enzyme catalyses tRNA(Glu) + L-glutamate + ATP = L-glutamyl-tRNA(Glu) + AMP + diphosphate. Functionally, catalyzes the attachment of glutamate to tRNA(Glu) in a two-step reaction: glutamate is first activated by ATP to form Glu-AMP and then transferred to the acceptor end of tRNA(Glu). In Chlamydia pneumoniae (Chlamydophila pneumoniae), this protein is Glutamate--tRNA ligase.